The primary structure comprises 1300 residues: Sal-like protein 3 (1300 aa).

A compositionally biased stretch (basic residues) spans 1-11 (MSRRKQAKPQH). Disordered stretches follow at residues 1–51 (MSRR…EETS), 84–162 (EDAP…YGAP), 234–258 (QRPP…PSQL), and 277–352 (GSGP…GSLL). The segment at 51–73 (SVCEKCCAEFFKWADFLEHQRSC) adopts a C2H2-type 1; atypical zinc-finger fold. Residues 87 to 100 (PAPPPEDFPEPSPA) are compositionally biased toward pro residues. A Phosphoserine modification is found at S109. Residues 122-132 (GEARPVEKEAE) are compositionally biased toward basic and acidic residues. A compositionally biased stretch (pro residues) spans 145–157 (PRPPPAAPAPPTP). 2 stretches are compositionally biased toward low complexity: residues 277-319 (GSGP…AAPA) and 329-352 (PQSA…GSLL). C2H2-type zinc fingers lie at residues 420–442 (HKCR…LRSH) and 448–470 (FKCN…FQRH). The disordered stretch occupies residues 523–633 (PTSVGLQLPP…VDGAPTSLGS (111 aa)). Low complexity predominate over residues 543-561 (SPSATPASRSPQRPSPASS). A compositionally biased stretch (polar residues) spans 577-586 (VSATAESPQS). 3 consecutive C2H2-type zinc fingers follow at residues 679–701 (NQCV…YRTH), 707–729 (FKCK…FGVH), and 739–761 (HSCP…IRMH). The disordered stretch occupies residues 864–955 (SVENGSGESD…GSGGAPGRAG (92 aa)). A compositionally biased stretch (low complexity) spans 889–910 (RSAGSPALSESSSSQALSPAPS). Position 919 is a phosphoserine (S919). 4 C2H2-type zinc fingers span residues 977-999 (TVCG…YRSH), 1005-1027 (FVCA…LLTH), 1113-1135 (HNCQ…ERTH), and 1141-1163 (FGCT…MGTH). S1177 carries the post-translational modification Phosphoserine. Residues 1259–1279 (GMDKARTGSSPPIVSLDKASS) are disordered.

Belongs to the sal C2H2-type zinc-finger protein family. In terms of tissue distribution, widely expressed in adult with highest levels in heart. Expressed in fetal brain (in neurons of hippocampus, cortex, mediodorsal and ventrolateral thalamic nuclei, putamen, cerebellum and brainstem).

It localises to the nucleus. Its function is as follows. Probable transcription factor. This Homo sapiens (Human) protein is Sal-like protein 3 (SALL3).